We begin with the raw amino-acid sequence, 386 residues long: uncharacterized protein (386 aa).

This sequence belongs to the TelA family.

This is an uncharacterized protein from Bacillus subtilis (strain 168).